We begin with the raw amino-acid sequence, 194 residues long: dCTP deaminase (194 aa).

DCTP is bound by residues 110-115 (RSSLAR), Asp128, 136-138 (VLE), Tyr171, Lys178, and Gln182. Glu138 functions as the Proton donor/acceptor in the catalytic mechanism. Positions 175–194 (KDAKYKNQQSAVSSRINQDD) are disordered. A compositionally biased stretch (polar residues) spans 180 to 194 (KNQQSAVSSRINQDD).

This sequence belongs to the dCTP deaminase family. In terms of assembly, homotrimer.

It catalyses the reaction dCTP + H2O + H(+) = dUTP + NH4(+). It functions in the pathway pyrimidine metabolism; dUMP biosynthesis; dUMP from dCTP (dUTP route): step 1/2. Its function is as follows. Catalyzes the deamination of dCTP to dUTP. The chain is dCTP deaminase from Actinobacillus pleuropneumoniae serotype 5b (strain L20).